A 276-amino-acid polypeptide reads, in one-letter code: Ribosomal RNA small subunit methyltransferase A (276 aa).

S-adenosyl-L-methionine-binding residues include Asn-27, Leu-29, Gly-54, Glu-75, Asp-101, and Asn-122.

This sequence belongs to the class I-like SAM-binding methyltransferase superfamily. rRNA adenine N(6)-methyltransferase family. RsmA subfamily.

The protein resides in the cytoplasm. The catalysed reaction is adenosine(1518)/adenosine(1519) in 16S rRNA + 4 S-adenosyl-L-methionine = N(6)-dimethyladenosine(1518)/N(6)-dimethyladenosine(1519) in 16S rRNA + 4 S-adenosyl-L-homocysteine + 4 H(+). Its function is as follows. Specifically dimethylates two adjacent adenosines (A1518 and A1519) in the loop of a conserved hairpin near the 3'-end of 16S rRNA in the 30S particle. May play a critical role in biogenesis of 30S subunits. The protein is Ribosomal RNA small subunit methyltransferase A of Brucella melitensis biotype 1 (strain ATCC 23456 / CCUG 17765 / NCTC 10094 / 16M).